A 433-amino-acid chain; its full sequence is MTRDRSNLLYEDAGRFIPGGVNSPVRSGRAVGTNPIFIREAKGCYLWDEDGNRYVDFVASWGPLIVGHAHPAVVEAVRAAVEKGTSYGIPTEIEVRMARKVVEMVPSIEMVRMVNSGTEATMSAIRLARGYTGRPGIIKFNGCYHGHGDCLLVKAGSGLATFGIPGSPGVPEEVVRHTIPLSYNDLDEVESVMERDGDRIAAIILEPVAANMGLVLPRPGFLEGLRKLCDKHGALLIFDEVITGFRLARGGAQEFFGVTPDLTCLGKIIGGGLPVGAYGGRRDIMMKMAPVGNVYQAGTLSGNPLAMAAGLATLDLLCEDGVYESLEEKTNHLVDGLNEAAGAAGVPVFTSRIASLGCGFFTSEPVFDFASALASNTDAYAVFFREMLNRGVYFAPAQFEAFFLSMAHESKDLDFTIEAAGNAFVRVKELCAF.

Lysine 267 carries the post-translational modification N6-(pyridoxal phosphate)lysine.

The protein belongs to the class-III pyridoxal-phosphate-dependent aminotransferase family. HemL subfamily. In terms of assembly, homodimer. Pyridoxal 5'-phosphate is required as a cofactor.

Its subcellular location is the cytoplasm. It catalyses the reaction (S)-4-amino-5-oxopentanoate = 5-aminolevulinate. Its pathway is porphyrin-containing compound metabolism; protoporphyrin-IX biosynthesis; 5-aminolevulinate from L-glutamyl-tRNA(Glu): step 2/2. The chain is Glutamate-1-semialdehyde 2,1-aminomutase from Syntrophobacter fumaroxidans (strain DSM 10017 / MPOB).